We begin with the raw amino-acid sequence, 311 residues long: Porphobilinogen deaminase (311 aa).

Residue Cys241 is modified to S-(dipyrrolylmethanemethyl)cysteine.

The protein belongs to the HMBS family. In terms of assembly, monomer. Dipyrromethane serves as cofactor.

It carries out the reaction 4 porphobilinogen + H2O = hydroxymethylbilane + 4 NH4(+). Its pathway is porphyrin-containing compound metabolism; protoporphyrin-IX biosynthesis; coproporphyrinogen-III from 5-aminolevulinate: step 2/4. Tetrapolymerization of the monopyrrole PBG into the hydroxymethylbilane pre-uroporphyrinogen in several discrete steps. The protein is Porphobilinogen deaminase of Bacillus pumilus (strain SAFR-032).